We begin with the raw amino-acid sequence, 159 residues long: RxLR effector protein 24 (159 aa).

The signal sequence occupies residues Met1 to Gly18. Positions Arg58–Arg82 match the RxLR-dEER motif. The RABA-binding domain stretch occupies residues Glu109–Thr159.

Belongs to the RxLR effector family. Interacts with potato RABA GTPases including RABA1a, RABA2a and RABA4a.

It is found in the secreted. Its subcellular location is the host cell membrane. It localises to the host endomembrane system. Functionally, effector protein that contributes to pathogen virulence. Targets members of the RABA GTPases subfamily to inhibit vesicular secretion, leading to an accumulation of secretory proteins in the endoplasmic reticulum. This is RxLR effector protein 24 from Phytophthora infestans (strain T30-4) (Potato late blight agent).